We begin with the raw amino-acid sequence, 286 residues long: Polyamine aminopropyltransferase (286 aa).

In terms of domain architecture, PABS spans 5–238 (TMWHETLHDQ…GIMTFAWATD (234 aa)). Gln33 serves as a coordination point for S-methyl-5'-thioadenosine. Spermidine-binding residues include His64 and Asp88. Residues Glu108 and 140-141 (DG) contribute to the S-methyl-5'-thioadenosine site. Asp158 functions as the Proton acceptor in the catalytic mechanism. 158-161 (DCTD) lines the spermidine pocket. Position 165 (Pro165) interacts with S-methyl-5'-thioadenosine.

This sequence belongs to the spermidine/spermine synthase family. In terms of assembly, homodimer or homotetramer.

Its subcellular location is the cytoplasm. The catalysed reaction is S-adenosyl 3-(methylsulfanyl)propylamine + putrescine = S-methyl-5'-thioadenosine + spermidine + H(+). It participates in amine and polyamine biosynthesis; spermidine biosynthesis; spermidine from putrescine: step 1/1. Functionally, catalyzes the irreversible transfer of a propylamine group from the amino donor S-adenosylmethioninamine (decarboxy-AdoMet) to putrescine (1,4-diaminobutane) to yield spermidine. In Salmonella enteritidis PT4 (strain P125109), this protein is Polyamine aminopropyltransferase.